The sequence spans 209 residues: Uracil phosphoribosyltransferase (209 aa).

Residues arginine 79, arginine 104, and 131–139 contribute to the 5-phospho-alpha-D-ribose 1-diphosphate site; that span reads DPMLATGGS. Residues isoleucine 194 and 199-201 each bind uracil; that span reads GDA. Aspartate 200 contacts 5-phospho-alpha-D-ribose 1-diphosphate.

It belongs to the UPRTase family. Mg(2+) is required as a cofactor.

It catalyses the reaction UMP + diphosphate = 5-phospho-alpha-D-ribose 1-diphosphate + uracil. The protein operates within pyrimidine metabolism; UMP biosynthesis via salvage pathway; UMP from uracil: step 1/1. With respect to regulation, allosterically activated by GTP. In terms of biological role, catalyzes the conversion of uracil and 5-phospho-alpha-D-ribose 1-diphosphate (PRPP) to UMP and diphosphate. The sequence is that of Uracil phosphoribosyltransferase from Streptococcus pyogenes serotype M49 (strain NZ131).